The chain runs to 102 residues: NADH-quinone oxidoreductase subunit K (102 aa).

Helical transmembrane passes span 6–26, 30–50, and 62–82; these read LEHG…GLMV, ILFV…AFVV, and VMFI…LAIL.

This sequence belongs to the complex I subunit 4L family. NDH-1 is composed of 13 different subunits. Subunits NuoA, H, J, K, L, M, N constitute the membrane sector of the complex.

Its subcellular location is the cell inner membrane. The catalysed reaction is a quinone + NADH + 5 H(+)(in) = a quinol + NAD(+) + 4 H(+)(out). In terms of biological role, NDH-1 shuttles electrons from NADH, via FMN and iron-sulfur (Fe-S) centers, to quinones in the respiratory chain. The immediate electron acceptor for the enzyme in this species is believed to be ubiquinone. Couples the redox reaction to proton translocation (for every two electrons transferred, four hydrogen ions are translocated across the cytoplasmic membrane), and thus conserves the redox energy in a proton gradient. The sequence is that of NADH-quinone oxidoreductase subunit K from Pseudomonas aeruginosa (strain LESB58).